Consider the following 242-residue polypeptide: ATP-dependent dethiobiotin synthetase BioD (242 aa).

An ATP-binding site is contributed by 12 to 17; sequence EVGKTV. A Mg(2+)-binding site is contributed by Thr-16. Residue Lys-37 is part of the active site. Ser-41 contributes to the substrate binding site. ATP contacts are provided by residues Asp-51 and 112–115; that span reads EGAG. Asp-51 and Glu-112 together coordinate Mg(2+).

This sequence belongs to the dethiobiotin synthetase family. Homodimer. Requires Mg(2+) as cofactor.

The protein localises to the cytoplasm. It carries out the reaction (7R,8S)-7,8-diammoniononanoate + CO2 + ATP = (4R,5S)-dethiobiotin + ADP + phosphate + 3 H(+). Its pathway is cofactor biosynthesis; biotin biosynthesis; biotin from 7,8-diaminononanoate: step 1/2. Its function is as follows. Catalyzes a mechanistically unusual reaction, the ATP-dependent insertion of CO2 between the N7 and N8 nitrogen atoms of 7,8-diaminopelargonic acid (DAPA, also called 7,8-diammoniononanoate) to form a ureido ring. The protein is ATP-dependent dethiobiotin synthetase BioD of Bacillus cereus (strain B4264).